A 159-amino-acid polypeptide reads, in one-letter code: Phosphopantetheine adenylyltransferase (159 aa).

Thr10 is a binding site for substrate. Residues 10–11 (TF) and His18 each bind ATP. Residues Lys42, Met74, and Arg88 each contribute to the substrate site. ATP is bound by residues 89–91 (GLR), Glu99, and 124–130 (WSFISSS).

This sequence belongs to the bacterial CoaD family. As to quaternary structure, homohexamer. Requires Mg(2+) as cofactor.

The protein resides in the cytoplasm. It carries out the reaction (R)-4'-phosphopantetheine + ATP + H(+) = 3'-dephospho-CoA + diphosphate. Its pathway is cofactor biosynthesis; coenzyme A biosynthesis; CoA from (R)-pantothenate: step 4/5. Reversibly transfers an adenylyl group from ATP to 4'-phosphopantetheine, yielding dephospho-CoA (dPCoA) and pyrophosphate. The chain is Phosphopantetheine adenylyltransferase from Salmonella dublin (strain CT_02021853).